The following is a 159-amino-acid chain: UPF0262 protein Dshi_0980 (159 aa).

This sequence belongs to the UPF0262 family.

The protein is UPF0262 protein Dshi_0980 of Dinoroseobacter shibae (strain DSM 16493 / NCIMB 14021 / DFL 12).